The sequence spans 393 residues: Na(+)/H(+) antiporter NhaA (393 aa).

The next 11 helical transmembrane spans lie at 24–44 (GGLV…SPLA), 58–78 (LSLL…LVGL), 96–116 (ILPG…YILF), 126–146 (GWAI…SLFG), 155–175 (IFLA…IALF), 178–198 (SDLN…LYGM), 214–234 (AVLW…GVLL), 267–287 (VAFI…FSGV), 300–320 (VAAG…FLLV), 338–358 (GVAA…LLAF), and 369–389 (MGIL…LATF).

Belongs to the NhaA Na(+)/H(+) (TC 2.A.33) antiporter family.

It is found in the cell inner membrane. It catalyses the reaction Na(+)(in) + 2 H(+)(out) = Na(+)(out) + 2 H(+)(in). Functionally, na(+)/H(+) antiporter that extrudes sodium in exchange for external protons. This chain is Na(+)/H(+) antiporter NhaA, found in Rhizobium etli (strain ATCC 51251 / DSM 11541 / JCM 21823 / NBRC 15573 / CFN 42).